Consider the following 1704-residue polypeptide: Phospholipid-transporting ATPase ABCA3 (1704 aa).

N-linked (GlcNAc...) asparagine glycosylation is present at N14. Residues V22–L42 traverse the membrane as a helical segment. 3 N-linked (GlcNAc...) asparagine glycosylation sites follow: N53, N124, and N140. 6 helical membrane-spanning segments follow: residues Y261 to V283, A307 to F327, S344 to V364, M373 to A393, L405 to F425, and F447 to T467. The ABC transporter 1 domain maps to I530–V763. G566–T573 is a binding site for ATP. N620 and N783 each carry an N-linked (GlcNAc...) asparagine glycan. The next 7 helical transmembrane spans lie at M925 to N945, I1100 to V1120, S1144 to F1164, L1183 to F1203, L1213 to I1233, L1245 to Y1265, and F1306 to T1326. Residues L1381–K1614 form the ABC transporter 2 domain. G1416–T1423 provides a ligand contact to ATP.

This sequence belongs to the ABC transporter superfamily. ABCA family. Homooligomer; disulfide-linked. Post-translationally, N-glycosylated. Localization at intracellular vesicles is accompanied by processing of oligosaccharide from high mannose type to complex type. N-linked glycosylation at Asn-124 and Asn-140 is required for stability and efficient anterograde trafficking and prevents from proteasomal degradation. In terms of processing, proteolytically cleaved by CTSL and to a lower extent by CTSB within multivesicular bodies (MVB) and lamellar bodies (LB) leading to a mature form of 150 kDa. As to expression, expressed in brain, pancreas, skeletal muscle and heart. Highly expressed in the lung in an AT2-cell-specific manner. Weakly expressed in placenta, kidney and liver. Also expressed in medullary thyroid carcinoma cells (MTC) and in C-cell carcinoma.

The protein localises to the endosome. It is found in the multivesicular body membrane. It localises to the cytoplasmic vesicle membrane. The protein resides in the late endosome membrane. Its subcellular location is the lysosome membrane. The enzyme catalyses ATP + H2O + xenobioticSide 1 = ADP + phosphate + xenobioticSide 2.. It catalyses the reaction a 1,2-diacyl-sn-glycero-3-phosphocholine(in) + ATP + H2O = a 1,2-diacyl-sn-glycero-3-phosphocholine(out) + ADP + phosphate + H(+). The catalysed reaction is ATP + H2O + phospholipidSide 1 = ADP + phosphate + phospholipidSide 2.. It carries out the reaction 1,2-dihexadecanoyl-sn-glycero-3-phosphocholine(in) + ATP + H2O = 1,2-dihexadecanoyl-sn-glycero-3-phosphocholine(out) + ADP + phosphate + H(+). The enzyme catalyses cholesterol(in) + ATP + H2O = cholesterol(out) + ADP + phosphate + H(+). It catalyses the reaction a 1,2-diacyl-sn-glycero-3-phospho-(1'-sn-glycerol)(in) + ATP + H2O = a 1,2-diacyl-sn-glycero-3-phospho-(1'-sn-glycerol)(out) + ADP + phosphate + H(+). The ATP-dependent phosphatidylcholine transport is competitively inhibited by miltefosine. Functionally, catalyzes the ATP-dependent transport of phospholipids such as phosphatidylcholine and phosphoglycerol from the cytoplasm into the lumen side of lamellar bodies, in turn participates in the lamellar bodies biogenesis and homeostasis of pulmonary surfactant. Transports preferentially phosphatidylcholine containing short acyl chains. In addition plays a role as an efflux transporter of miltefosine across macrophage membranes and free cholesterol (FC) through intralumenal vesicles by removing FC from the cell as a component of surfactant and protects cells from free cholesterol toxicity. The sequence is that of Phospholipid-transporting ATPase ABCA3 from Homo sapiens (Human).